Reading from the N-terminus, the 231-residue chain is Ribosomal RNA small subunit methyltransferase G (231 aa).

S-adenosyl-L-methionine contacts are provided by glycine 85, phenylalanine 90, and arginine 154.

This sequence belongs to the methyltransferase superfamily. RNA methyltransferase RsmG family.

It localises to the cytoplasm. The enzyme catalyses guanosine(527) in 16S rRNA + S-adenosyl-L-methionine = N(7)-methylguanosine(527) in 16S rRNA + S-adenosyl-L-homocysteine. Its function is as follows. Specifically methylates the N7 position of guanine in position 527 of 16S rRNA. This Rhodopseudomonas palustris (strain BisA53) protein is Ribosomal RNA small subunit methyltransferase G.